We begin with the raw amino-acid sequence, 188 residues long: dCTP deaminase (188 aa).

DCTP-binding positions include 111–116 (KSTYAR), 135–137 (TLE), Gln156, Tyr170, and Gln180. The Proton donor/acceptor role is filled by Glu137.

This sequence belongs to the dCTP deaminase family. Homotrimer.

The catalysed reaction is dCTP + H2O + H(+) = dUTP + NH4(+). It functions in the pathway pyrimidine metabolism; dUMP biosynthesis; dUMP from dCTP (dUTP route): step 1/2. Functionally, catalyzes the deamination of dCTP to dUTP. The sequence is that of dCTP deaminase from Pseudomonas syringae pv. tomato (strain ATCC BAA-871 / DC3000).